The primary structure comprises 119 residues: Large ribosomal subunit protein uL22c (119 aa).

It belongs to the universal ribosomal protein uL22 family. As to quaternary structure, part of the 50S ribosomal subunit.

It localises to the plastid. The protein resides in the chloroplast. This protein binds specifically to 23S rRNA. Functionally, the globular domain of the protein is located near the polypeptide exit tunnel on the outside of the subunit, while an extended beta-hairpin is found that lines the wall of the exit tunnel in the center of the 70S ribosome. The chain is Large ribosomal subunit protein uL22c (rpl22) from Anthoceros angustus (Hornwort).